The chain runs to 396 residues: Bifunctional enzyme Fae/Hps (396 aa).

Positions 1–161 (MMLIGEALIG…HEKDRAAHAV (161 aa)) are formaldehyde-activating enzyme. Residue H17 is the Proton donor of the active site. Substrate-binding residues include D19, L48, K66, T68, and Q83. The 3-hexulose-6-phosphate synthase stretch occupies residues 162–396 (MGFKISKLWD…IDQFRIMTDF (235 aa)).

In the N-terminal section; belongs to the formaldehyde-activating enzyme family. This sequence in the C-terminal section; belongs to the HPS/KGPDC family. HPS subfamily.

The enzyme catalyses 5,6,7,8-tetrahydromethanopterin + formaldehyde = 5,10-methylenetetrahydromethanopterin + H2O. It catalyses the reaction D-ribulose 5-phosphate + formaldehyde = D-arabino-hex-3-ulose 6-phosphate. Its pathway is carbohydrate biosynthesis; D-ribose 5-phosphate biosynthesis. Catalyzes the condensation of formaldehyde with tetrahydromethanopterin (H(4)MPT) to 5,10-methylenetetrahydromethanopterin. In terms of biological role, catalyzes the reversible formation of ribulose-5-phosphate and formaldehyde from 3-hexulose-6-phosphate. This is Bifunctional enzyme Fae/Hps from Methanococcoides burtonii (strain DSM 6242 / NBRC 107633 / OCM 468 / ACE-M).